The chain runs to 216 residues: MSCLPALDKFLQNYHQSYLSTLGELPRYYPQGEPSLCIQGEFDESSDEAVSWLPVKREQLGSFANVEHALELTLWPDINHFYGEYFAAPVLFDSPWGTGELLQVWNEADFDALQQNIIGHLMMKQKLKQPATWFIGLLDEGDKMLTVDNADGSVWVEIPGELPSTQLAPSLAEFIEALSPRIAPPVKHEELPMPALEHPGIFASFKRMWHNLIGKR.

Belongs to the Syd family.

The protein localises to the cell inner membrane. In terms of biological role, interacts with the SecY protein in vivo. May bind preferentially to an uncomplexed state of SecY, thus functioning either as a chelating agent for excess SecY in the cell or as a regulatory factor that negatively controls the translocase function. The sequence is that of Protein Syd from Shewanella sp. (strain MR-7).